We begin with the raw amino-acid sequence, 697 residues long: Potassium-transporting ATPase ATP-binding subunit (697 aa).

4 helical membrane-spanning segments follow: residues 55 to 75, 79 to 99, 245 to 265, and 271 to 291; these read PIMFVVEIGFIITFILSFLPS, SIPGWFNITVSLILLFTVLFA, LTLIFLIVVVTLPIFTNYLGF, and VLVALLVCLIPTTIGGLLSAI. The active-site 4-aspartylphosphate intermediate is Asp-324. ATP is bound by residues Asp-361, Glu-365, 393 to 400, and Lys-412; that span reads FKAETRMS. 2 residues coordinate Mg(2+): Asp-535 and Asp-539. Transmembrane regions (helical) follow at residues 605–625, 633–653, and 677–697; these read FAIIPAMFTLAIPQMEALNIM, AILSALLFNAVIIPLLIPLAM, and GGVIVPFIGIKVIDIIVGLFI.

It belongs to the cation transport ATPase (P-type) (TC 3.A.3) family. Type IA subfamily. As to quaternary structure, the system is composed of three essential subunits: KdpA, KdpB and KdpC.

The protein localises to the cell membrane. It carries out the reaction K(+)(out) + ATP + H2O = K(+)(in) + ADP + phosphate + H(+). Functionally, part of the high-affinity ATP-driven potassium transport (or Kdp) system, which catalyzes the hydrolysis of ATP coupled with the electrogenic transport of potassium into the cytoplasm. This subunit is responsible for energy coupling to the transport system and for the release of the potassium ions to the cytoplasm. The polypeptide is Potassium-transporting ATPase ATP-binding subunit (Bacillus cereus (strain ZK / E33L)).